A 446-amino-acid polypeptide reads, in one-letter code: Tubulin beta-6 chain (446 aa).

The MREI motif motif lies at 1-4 (MREI). GTP is bound by residues glutamine 11, glutamate 69, serine 138, glycine 142, threonine 143, and glycine 144. Glutamate 69 is a binding site for Mg(2+). Phosphoserine; by CDK1 is present on serine 172. GTP-binding residues include asparagine 204 and asparagine 226. The residue at position 438 (glutamate 438) is a 5-glutamyl polyglutamate.

The protein belongs to the tubulin family. As to quaternary structure, dimer of alpha and beta chains. A typical microtubule is a hollow water-filled tube with an outer diameter of 25 nm and an inner diameter of 15 nM. Alpha-beta heterodimers associate head-to-tail to form protofilaments running lengthwise along the microtubule wall with the beta-tubulin subunit facing the microtubule plus end conferring a structural polarity. Microtubules usually have 13 protofilaments but different protofilament numbers can be found in some organisms and specialized cells. The cofactor is Mg(2+). Post-translationally, some glutamate residues at the C-terminus are polyglycylated, resulting in polyglycine chains on the gamma-carboxyl group. Glycylation is mainly limited to tubulin incorporated into axonemes (cilia and flagella) whereas glutamylation is prevalent in neuronal cells, centrioles, axonemes, and the mitotic spindle. Both modifications can coexist on the same protein on adjacent residues, and lowering polyglycylation levels increases polyglutamylation, and reciprocally. Cilia and flagella glycylation is required for their stability and maintenance. Flagella glycylation controls sperm motility. In terms of processing, some glutamate residues at the C-terminus are polyglutamylated, resulting in polyglutamate chains on the gamma-carboxyl group. Polyglutamylation plays a key role in microtubule severing by spastin (SPAST). SPAST preferentially recognizes and acts on microtubules decorated with short polyglutamate tails: severing activity by SPAST increases as the number of glutamates per tubulin rises from one to eight, but decreases beyond this glutamylation threshold. Glutamylation is also involved in cilia motility. Phosphorylated on Ser-172 by CDK1 during the cell cycle, from metaphase to telophase, but not in interphase. This phosphorylation inhibits tubulin incorporation into microtubules.

It localises to the cytoplasm. The protein resides in the cytoskeleton. Functionally, tubulin is the major constituent of microtubules, a cylinder consisting of laterally associated linear protofilaments composed of alpha- and beta-tubulin heterodimers. Microtubules grow by the addition of GTP-tubulin dimers to the microtubule end, where a stabilizing cap forms. Below the cap, tubulin dimers are in GDP-bound state, owing to GTPase activity of alpha-tubulin. This chain is Tubulin beta-6 chain (TUBB6), found in Bos taurus (Bovine).